We begin with the raw amino-acid sequence, 234 residues long: Small ribosomal subunit protein uS3 (234 aa).

In terms of domain architecture, KH type-2 spans 39–107; that stretch reads IRKFLKKELY…EVSINIKEVK (69 aa).

It belongs to the universal ribosomal protein uS3 family. In terms of assembly, part of the 30S ribosomal subunit. Forms a tight complex with proteins S10 and S14.

Functionally, binds the lower part of the 30S subunit head. Binds mRNA in the 70S ribosome, positioning it for translation. This is Small ribosomal subunit protein uS3 from Helicobacter pylori (strain J99 / ATCC 700824) (Campylobacter pylori J99).